The sequence spans 306 residues: Tyrosine recombinase XerC (306 aa).

The 85-residue stretch at Met-1–Gln-85 folds into the Core-binding (CB) domain. The 184-residue stretch at Phe-106–Gln-289 folds into the Tyr recombinase domain. Residues Arg-147, Lys-171, His-241, Arg-244, and His-267 contribute to the active site. Residue Tyr-276 is the O-(3'-phospho-DNA)-tyrosine intermediate of the active site.

It belongs to the 'phage' integrase family. XerC subfamily. In terms of assembly, forms a cyclic heterotetrameric complex composed of two molecules of XerC and two molecules of XerD.

The protein localises to the cytoplasm. Its function is as follows. Site-specific tyrosine recombinase, which acts by catalyzing the cutting and rejoining of the recombining DNA molecules. The XerC-XerD complex is essential to convert dimers of the bacterial chromosome into monomers to permit their segregation at cell division. It also contributes to the segregational stability of plasmids. The sequence is that of Tyrosine recombinase XerC from Herpetosiphon aurantiacus (strain ATCC 23779 / DSM 785 / 114-95).